A 132-amino-acid chain; its full sequence is UPF0299 membrane protein Ent638_2744 (132 aa).

Helical transmembrane passes span 8–28 (VWQY…GIFI), 31–51 (LLPI…LLLA), 63–83 (GCFV…VGVM), and 93–113 (FGPI…VVSW).

This sequence belongs to the UPF0299 family.

It localises to the cell inner membrane. The polypeptide is UPF0299 membrane protein Ent638_2744 (Enterobacter sp. (strain 638)).